A 406-amino-acid polypeptide reads, in one-letter code: Vacuole membrane protein 1 (406 aa).

An N-acetylalanine modification is found at alanine 2. The Cytoplasmic segment spans residues 2-43; the sequence is AENGQNCDQRRVAMNKEQYNGNFTDPSSVNEKKRRDREERQN. Residues 44–63 traverse the membrane as a helical segment; sequence IVLWRQPLITLQYFSLETLV. At 64–77 the chain is on the extracellular side; the sequence is ILKEWTSKLWHRQS. A helical transmembrane segment spans residues 78-98; that stretch reads IVVSFLLLLAVLTATYYVEGA. Over 99–109 the chain is Cytoplasmic; that stretch reads HQQYVQRIEKQ. Residues 110 to 130 form a helical membrane-spanning segment; the sequence is FLLYAYWIGLGILSSVGLGTG. Residues 131–250 are Extracellular-facing; the sequence is LHTFLLYLGP…ASRAKLAVQN (120 aa). The segment at 173–316 is VTT domain; sequence GTEGTISLWS…FVIVAFSKHI (144 aa). The chain crosses the membrane as a helical span at residues 251–271; that stretch reads LVQKVGFFGILACASIPNPLF. Residues 272-273 lie on the Cytoplasmic side of the membrane; the sequence is DL. A helical membrane pass occupies residues 274 to 294; it reads AGITCGHFLVPFWTFFGATLI. Over 295-306 the chain is Extracellular; sequence GKAIIKMHIQKL. Residues 307–327 traverse the membrane as a helical segment; the sequence is FVIVAFSKHIVEQMVAFIGAV. Residues 328 to 363 are Cytoplasmic-facing; sequence PGIGPSLQKPFQEYLEAQRQKLHHRSEMGTPQGENW. The chain crosses the membrane as a helical span at residues 364–384; the sequence is LSWMFEKLVVVMVCYFILSII. The Extracellular portion of the chain corresponds to 385–406; sequence NSMAQSYAKRIQQRLDPKEKTK.

This sequence belongs to the VMP1 family. Interacts with BECN1. Interacts with TJP1. Interacts with TP53INP2. Interacts with TMEM41B. Interacts with ATP2A2, PLN and SLN; competes with PLN and SLN to prevent them from forming an inhibitory complex with ATP2A2. Interacts with ATG2A.

The protein localises to the endoplasmic reticulum-Golgi intermediate compartment membrane. Its subcellular location is the cell membrane. The protein resides in the vacuole membrane. It is found in the endoplasmic reticulum membrane. The enzyme catalyses a 1,2-diacyl-sn-glycero-3-phospho-L-serine(in) = a 1,2-diacyl-sn-glycero-3-phospho-L-serine(out). It carries out the reaction cholesterol(in) = cholesterol(out). The catalysed reaction is a 1,2-diacyl-sn-glycero-3-phosphocholine(in) = a 1,2-diacyl-sn-glycero-3-phosphocholine(out). It catalyses the reaction a 1,2-diacyl-sn-glycero-3-phosphoethanolamine(in) = a 1,2-diacyl-sn-glycero-3-phosphoethanolamine(out). Phospholipid scramblase involved in lipid homeostasis and membrane dynamics processes. Has phospholipid scramblase activity toward cholesterol and phosphatidylserine, as well as phosphatidylethanolamine and phosphatidylcholine. Required for autophagosome formation: participates in early stages of autophagosome biogenesis at the endoplasmic reticulum (ER) membrane by reequilibrating the leaflets of the ER as lipids are extracted by ATG2 (ATG2A or ATG2B) to mediate autophagosome assembly. Regulates ATP2A2 activity to control ER-isolation membrane contacts for autophagosome formation. In addition to autophagy, involved in other processes in which phospholipid scramblase activity is required. Modulates ER contacts with lipid droplets, mitochondria and endosomes. Plays an essential role in formation of cell junctions. Upon stress such as bacterial and viral infection, promotes formation of cytoplasmic vacuoles followed by cell death. Involved in the cytoplasmic vacuolization of acinar cells during the early stage of acute pancreatitis. The polypeptide is Vacuole membrane protein 1 (Bos taurus (Bovine)).